We begin with the raw amino-acid sequence, 320 residues long: Delta(7)-sterol 5(6)-desaturase erg3C (320 aa).

3 helical membrane passes run 43 to 63 (VISI…FFSA), 91 to 111 (SSLS…LAEV), and 127 to 147 (PWLV…IYWI). Positions 134 to 283 (ILYMAFNDIG…FTWADAYFGS (150 aa)) constitute a Fatty acid hydroxylase domain. The Histidine box-1 signature appears at 148 to 152 (HRLEH). Residues 161 to 165 (HKPHH) carry the Histidine box-2 motif. A helical transmembrane segment spans residues 224–244 (YMVLFAAVQIWTILIHDGDMI). The Histidine box-3 signature appears at 259-263 (HTLHH).

This sequence belongs to the sterol desaturase family. Requires Fe cation as cofactor.

Its subcellular location is the endoplasmic reticulum membrane. Functionally, delta(7)-sterol 5(6)-desaturase; part of the third module of ergosterol biosynthesis pathway that includes the late steps of the pathway. Erg3C is a minor delta(7)-sterol 5(6)-desaturase within the ergosterol pathway, erg3B being the major one. The third module or late pathway involves the ergosterol synthesis itself through consecutive reactions that mainly occur in the endoplasmic reticulum (ER) membrane. Firstly, the squalene synthase erg9 catalyzes the condensation of 2 farnesyl pyrophosphate moieties to form squalene, which is the precursor of all steroids. Squalene synthase is crucial for balancing the incorporation of farnesyl diphosphate (FPP) into sterol and nonsterol isoprene synthesis. Secondly, squalene is converted into lanosterol by the consecutive action of the squalene epoxidase erg1 and the lanosterol synthase erg7. Then, the delta(24)-sterol C-methyltransferase erg6 methylates lanosterol at C-24 to produce eburicol. Eburicol is the substrate of the sterol 14-alpha demethylase encoded by cyp51A and cyp51B, to yield 4,4,24-trimethyl ergosta-8,14,24(28)-trienol. The C-14 reductase erg24 then reduces the C14=C15 double bond which leads to 4,4-dimethylfecosterol. A sequence of further demethylations at C-4, involving the C-4 demethylation complex containing the C-4 methylsterol oxidases erg25A or erg25B, the sterol-4-alpha-carboxylate 3-dehydrogenase erg26 and the 3-keto-steroid reductase erg27, leads to the production of fecosterol via 4-methylfecosterol. The C-8 sterol isomerase erg2 then catalyzes the reaction which results in unsaturation at C-7 in the B ring of sterols and thus converts fecosterol to episterol. The sterol-C5-desaturase erg3B then catalyzes the introduction of a C-5 double bond in the B ring to produce 5-dehydroepisterol. The 2 other sterol-C5-desaturases, erg3A and erg3C, seem to be less important in ergosterol biosynthesis. The C-22 sterol desaturase erg5 further converts 5-dehydroepisterol into ergosta-5,7,22,24(28)-tetraen-3beta-ol by forming the C-22(23) double bond in the sterol side chain. Finally, ergosta-5,7,22,24(28)-tetraen-3beta-ol is substrate of the C-24(28) sterol reductases erg4A and erg4B to produce ergosterol. Possible alternative sterol biosynthetic pathways might exist from fecosterol to ergosterol, depending on the activities of the erg3 isoforms. This chain is Delta(7)-sterol 5(6)-desaturase erg3C, found in Aspergillus fumigatus (strain ATCC MYA-4609 / CBS 101355 / FGSC A1100 / Af293) (Neosartorya fumigata).